Here is a 116-residue protein sequence, read N- to C-terminus: Probable early E4 11 kDa protein (116 aa).

The sequence is that of Probable early E4 11 kDa protein from Human adenovirus A serotype 12 (HAdV-12).